A 479-amino-acid polypeptide reads, in one-letter code: Ribulose bisphosphate carboxylase large chain (479 aa).

Positions 1–2 (MS) are excised as a propeptide. The substrate site is built by Asn-123 and Thr-173. The active-site Proton acceptor is Lys-175. Lys-177 provides a ligand contact to substrate. Mg(2+)-binding residues include Lys-201, Asp-203, and Glu-204. Position 201 is an N6-carboxylysine (Lys-201). Position 208 is a phosphoserine (Ser-208). The Proton acceptor role is filled by His-294. Substrate is bound by residues Arg-295 and His-327. Thr-330 carries the phosphothreonine modification. Substrate is bound at residue Ser-379.

This sequence belongs to the RuBisCO large chain family. Type I subfamily. In terms of assembly, heterohexadecamer of 8 large chains and 8 small chains; disulfide-linked. The disulfide link is formed within the large subunit homodimers. It depends on Mg(2+) as a cofactor. The disulfide bond which can form in the large chain dimeric partners within the hexadecamer appears to be associated with oxidative stress and protein turnover.

It is found in the plastid. Its subcellular location is the chloroplast. It catalyses the reaction 2 (2R)-3-phosphoglycerate + 2 H(+) = D-ribulose 1,5-bisphosphate + CO2 + H2O. It carries out the reaction D-ribulose 1,5-bisphosphate + O2 = 2-phosphoglycolate + (2R)-3-phosphoglycerate + 2 H(+). Its function is as follows. RuBisCO catalyzes two reactions: the carboxylation of D-ribulose 1,5-bisphosphate, the primary event in carbon dioxide fixation, as well as the oxidative fragmentation of the pentose substrate in the photorespiration process. Both reactions occur simultaneously and in competition at the same active site. The sequence is that of Ribulose bisphosphate carboxylase large chain from Draba nemorosa (Woodland whitlowgrass).